A 124-amino-acid polypeptide reads, in one-letter code: Small ribosomal subunit protein uS12 (124 aa).

At aspartate 89 the chain carries 3-methylthioaspartic acid. Residues 104 to 124 form a disordered region; sequence SAGVQNRNRGRSKYGTKRPKK. Over residues 111-124 the composition is skewed to basic residues; sequence NRGRSKYGTKRPKK.

It belongs to the universal ribosomal protein uS12 family. In terms of assembly, part of the 30S ribosomal subunit. Contacts proteins S8 and S17. May interact with IF1 in the 30S initiation complex.

With S4 and S5 plays an important role in translational accuracy. Its function is as follows. Interacts with and stabilizes bases of the 16S rRNA that are involved in tRNA selection in the A site and with the mRNA backbone. Located at the interface of the 30S and 50S subunits, it traverses the body of the 30S subunit contacting proteins on the other side and probably holding the rRNA structure together. The combined cluster of proteins S8, S12 and S17 appears to hold together the shoulder and platform of the 30S subunit. The protein is Small ribosomal subunit protein uS12 of Pelotomaculum thermopropionicum (strain DSM 13744 / JCM 10971 / SI).